Consider the following 202-residue polypeptide: ATP-dependent Clp protease proteolytic subunit (202 aa).

Serine 106 serves as the catalytic Nucleophile. Histidine 131 is a catalytic residue.

Belongs to the peptidase S14 family. Fourteen ClpP subunits assemble into 2 heptameric rings which stack back to back to give a disk-like structure with a central cavity, resembling the structure of eukaryotic proteasomes.

Its subcellular location is the cytoplasm. The catalysed reaction is Hydrolysis of proteins to small peptides in the presence of ATP and magnesium. alpha-casein is the usual test substrate. In the absence of ATP, only oligopeptides shorter than five residues are hydrolyzed (such as succinyl-Leu-Tyr-|-NHMec, and Leu-Tyr-Leu-|-Tyr-Trp, in which cleavage of the -Tyr-|-Leu- and -Tyr-|-Trp bonds also occurs).. Functionally, cleaves peptides in various proteins in a process that requires ATP hydrolysis. Has a chymotrypsin-like activity. Plays a major role in the degradation of misfolded proteins. In Verminephrobacter eiseniae (strain EF01-2), this protein is ATP-dependent Clp protease proteolytic subunit.